A 389-amino-acid polypeptide reads, in one-letter code: Succinyl-diaminopimelate desuccinylase (389 aa).

Residue His72 participates in Zn(2+) binding. The active site involves Asp74. Asp105 is a Zn(2+) binding site. The active-site Proton acceptor is the Glu144. Zn(2+) contacts are provided by Glu145, Glu173, and His362.

The protein belongs to the peptidase M20A family. DapE subfamily. In terms of assembly, homodimer. Requires Zn(2+) as cofactor. The cofactor is Co(2+).

The catalysed reaction is N-succinyl-(2S,6S)-2,6-diaminopimelate + H2O = (2S,6S)-2,6-diaminopimelate + succinate. It functions in the pathway amino-acid biosynthesis; L-lysine biosynthesis via DAP pathway; LL-2,6-diaminopimelate from (S)-tetrahydrodipicolinate (succinylase route): step 3/3. Its function is as follows. Catalyzes the hydrolysis of N-succinyl-L,L-diaminopimelic acid (SDAP), forming succinate and LL-2,6-diaminopimelate (DAP), an intermediate involved in the bacterial biosynthesis of lysine and meso-diaminopimelic acid, an essential component of bacterial cell walls. The chain is Succinyl-diaminopimelate desuccinylase from Rhodopseudomonas palustris (strain HaA2).